The sequence spans 412 residues: Protein png-1 (412 aa).

Cys150, Cys153, Cys182, and Cys185 together coordinate Zn(2+). The segment at 363–412 (AAAARGGRSSPDNKSGANMMGSPATGDIKRPIPEDAPVPDVPSLWPTYGP) is disordered.

This sequence belongs to the transglutaminase-like superfamily. PNGase family.

This chain is Protein png-1 (un-7), found in Neurospora crassa (strain ATCC 24698 / 74-OR23-1A / CBS 708.71 / DSM 1257 / FGSC 987).